Reading from the N-terminus, the 767-residue chain is Cation/H(+) antiporter 27 (767 aa).

A run of 11 helical transmembrane segments spans residues 39–59 (LPLL…FQFL), 63–83 (FGKF…PSVI), 99–119 (VYII…ITTC), 135–155 (INGI…AILI), 173–193 (HVAI…LSSL), 205–225 (LASM…NIAI), 242–262 (VLQM…MLWM), 280–300 (ICVL…PYFF), 323–343 (IGCF…GLNI), 371–391 (IALP…VGFI), and 415–435 (KSFG…IVIV).

The protein belongs to the monovalent cation:proton antiporter 2 (CPA2) transporter (TC 2.A.37) family. CHX (TC 2.A.37.4) subfamily. Specifically expressed in pollen.

Its subcellular location is the membrane. Functionally, may operate as a cation/H(+) antiporter. The sequence is that of Cation/H(+) antiporter 27 (CHX27) from Arabidopsis thaliana (Mouse-ear cress).